Reading from the N-terminus, the 566-residue chain is Acetyl-coenzyme A carboxylase carboxyl transferase subunits beta/alpha (566 aa).

The acetyl-coenzyme A carboxylase carboxyl transferase subunit beta stretch occupies residues 1–243 (MNPTTPRGGQ…QTAEFLLRHG (243 aa)). Residues 11–280 (LWSRCGGCAS…PVGAGHESEC (270 aa)) enclose the CoA carboxyltransferase N-terminal domain. The carboxyltransferase stretch occupies residues 11–534 (LWSRCGGCAS…REAVLAHLVP (524 aa)). Positions 15, 18, 34, and 37 each coordinate Zn(2+). Positions 244–557 (QVDLVVPRHA…RRRFRRFGAA (314 aa)) are acetyl-coenzyme A carboxylase carboxyl transferase subunit alpha. Residues 268–295 (GREPVGAGHESECPPVDGSSTQERGADK) form a disordered region. Residues 282-534 (PVDGSSTQER…REAVLAHLVP (253 aa)) form the CoA carboxyltransferase C-terminal domain.

This sequence in the N-terminal section; belongs to the AccD/PCCB family. It in the C-terminal section; belongs to the AccA family. Acetyl-CoA carboxylase is a heterotetramer composed of biotin carboxyl carrier protein (AccB), biotin carboxylase (AccC) and two subunits of ACCase subunit beta/alpha. Requires Zn(2+) as cofactor.

Its subcellular location is the cytoplasm. It carries out the reaction N(6)-carboxybiotinyl-L-lysyl-[protein] + acetyl-CoA = N(6)-biotinyl-L-lysyl-[protein] + malonyl-CoA. Its pathway is lipid metabolism; malonyl-CoA biosynthesis; malonyl-CoA from acetyl-CoA: step 1/1. Functionally, component of the acetyl coenzyme A carboxylase (ACC) complex. Biotin carboxylase (BC) catalyzes the carboxylation of biotin on its carrier protein (BCCP) and then the CO(2) group is transferred by the transcarboxylase to acetyl-CoA to form malonyl-CoA. The sequence is that of Acetyl-coenzyme A carboxylase carboxyl transferase subunits beta/alpha (accD) from Salinispora tropica (strain ATCC BAA-916 / DSM 44818 / JCM 13857 / NBRC 105044 / CNB-440).